Reading from the N-terminus, the 516-residue chain is Cytochrome P450 1A2 (516 aa).

A glycan (O-linked (GlcNAc) serine) is linked at S69. Residues F226 and D361–L365 each bind substrate. C458 is a binding site for heme.

The protein belongs to the cytochrome P450 family. Interacts with PGRMC1; the interaction requires PGRMC1 homodimerization. Heme serves as cofactor.

It localises to the endoplasmic reticulum membrane. It is found in the microsome membrane. The catalysed reaction is an organic molecule + reduced [NADPH--hemoprotein reductase] + O2 = an alcohol + oxidized [NADPH--hemoprotein reductase] + H2O + H(+). It catalyses the reaction 17beta-estradiol + reduced [NADPH--hemoprotein reductase] + O2 = 2-hydroxy-17beta-estradiol + oxidized [NADPH--hemoprotein reductase] + H2O + H(+). It carries out the reaction 17beta-estradiol + reduced [NADPH--hemoprotein reductase] + O2 = 4-hydroxy-17beta-estradiol + oxidized [NADPH--hemoprotein reductase] + H2O + H(+). The enzyme catalyses estrone + reduced [NADPH--hemoprotein reductase] + O2 = 2-hydroxyestrone + oxidized [NADPH--hemoprotein reductase] + H2O + H(+). The catalysed reaction is estrone + reduced [NADPH--hemoprotein reductase] + O2 = 4-hydroxyestrone + oxidized [NADPH--hemoprotein reductase] + H2O + H(+). It catalyses the reaction cholesterol + reduced [NADPH--hemoprotein reductase] + O2 = 25-hydroxycholesterol + oxidized [NADPH--hemoprotein reductase] + H2O + H(+). It carries out the reaction all-trans-retinol + reduced [NADPH--hemoprotein reductase] + O2 = all-trans-retinal + oxidized [NADPH--hemoprotein reductase] + 2 H2O + H(+). The enzyme catalyses all-trans-retinal + reduced [NADPH--hemoprotein reductase] + O2 = all-trans-retinoate + oxidized [NADPH--hemoprotein reductase] + H2O + 2 H(+). The catalysed reaction is (5Z,8Z,11Z,14Z)-eicosatetraenoate + reduced [NADPH--hemoprotein reductase] + O2 = (14R,15S)-epoxy-(5Z,8Z,11Z)-eicosatrienoate + oxidized [NADPH--hemoprotein reductase] + H2O + H(+). It catalyses the reaction (5Z,8Z,11Z,14Z)-eicosatetraenoate + reduced [NADPH--hemoprotein reductase] + O2 = (14S,15R)-epoxy-(5Z,8Z,11Z)-eicosatrienoate + oxidized [NADPH--hemoprotein reductase] + H2O + H(+). It carries out the reaction (5Z,8Z,11Z,14Z,17Z)-eicosapentaenoate + reduced [NADPH--hemoprotein reductase] + O2 = (17R,18S)-epoxy-(5Z,8Z,11Z,14Z)-eicosatetraenoate + oxidized [NADPH--hemoprotein reductase] + H2O + H(+). The enzyme catalyses (4Z,7Z,10Z,13Z,16Z,19Z)-docosahexaenoate + reduced [NADPH--hemoprotein reductase] + O2 = (19R,20S)-epoxy-(4Z,7Z,10Z,13Z,16Z)-docosapentaenoate + oxidized [NADPH--hemoprotein reductase] + H2O + H(+). The catalysed reaction is (5S)-hydroperoxy-(6E,8Z,11Z,14Z)-eicosatetraenoate = 5-oxo-(6E,8Z,11Z,14Z)-eicosatetraenoate + H2O. It catalyses the reaction (12S)-hydroperoxy-(5Z,8Z,10E,14Z)-eicosatetraenoate = 12-oxo-(5Z,8Z,10E,14Z)-eicosatetraenoate + H2O. It carries out the reaction (15S)-hydroperoxy-(5Z,8Z,11Z,13E)-eicosatetraenoate = 15-oxo-(5Z,8Z,11Z,13E)-eicosatetraenoate + H2O. The enzyme catalyses (13S)-hydroperoxy-(9Z,11E)-octadecadienoate = 13-oxo-(9Z,11E)-octadecadienoate + H2O. The catalysed reaction is (5Z,8Z,11Z,14Z)-eicosatetraenoate + reduced [NADPH--hemoprotein reductase] + O2 = 13-hydroxy-(5Z,8Z,11Z,14Z)-eicosatetraenoate + oxidized [NADPH--hemoprotein reductase] + H2O + H(+). It catalyses the reaction (5Z,8Z,11Z,14Z)-eicosatetraenoate + reduced [NADPH--hemoprotein reductase] + O2 = 19-hydroxy-(5Z,8Z,11Z,14Z)-eicosatetraenoate + oxidized [NADPH--hemoprotein reductase] + H2O + H(+). It carries out the reaction (9Z,12Z)-octadecadienoate + reduced [NADPH--hemoprotein reductase] + O2 = 11-hydroxy-(9Z,12Z)-octadecadienoate + oxidized [NADPH--hemoprotein reductase] + H2O + H(+). The protein operates within cofactor metabolism; retinol metabolism. Its pathway is steroid metabolism; cholesterol metabolism. It functions in the pathway lipid metabolism; arachidonate metabolism. Its function is as follows. A cytochrome P450 monooxygenase involved in the metabolism of various endogenous substrates, including fatty acids, steroid hormones and vitamins. Mechanistically, uses molecular oxygen inserting one oxygen atom into a substrate, and reducing the second into a water molecule, with two electrons provided by NADPH via cytochrome P450 reductase (NADPH--hemoprotein reductase). Catalyzes the hydroxylation of carbon-hydrogen bonds. Exhibits high catalytic activity for the formation of hydroxyestrogens from estrone (E1) and 17beta-estradiol (E2), namely 2-hydroxy E1 and E2. Metabolizes cholesterol toward 25-hydroxycholesterol, a physiological regulator of cellular cholesterol homeostasis. May act as a major enzyme for all-trans retinoic acid biosynthesis in the liver. Catalyzes two successive oxidative transformation of all-trans retinol to all-trans retinal and then to the active form all-trans retinoic acid. Primarily catalyzes stereoselective epoxidation of the last double bond of polyunsaturated fatty acids (PUFA), displaying a strong preference for the (R,S) stereoisomer. Catalyzes bisallylic hydroxylation and omega-1 hydroxylation of PUFA. May also participate in eicosanoids metabolism by converting hydroperoxide species into oxo metabolites (lipoxygenase-like reaction, NADPH-independent). Plays a role in the oxidative metabolism of xenobiotics. Catalyzes the N-hydroxylation of heterocyclic amines and the O-deethylation of phenacetin. Metabolizes caffeine via N3-demethylation. This Oryctolagus cuniculus (Rabbit) protein is Cytochrome P450 1A2 (CYP1A2).